A 145-amino-acid chain; its full sequence is Brain and acute leukemia cytoplasmic protein (145 aa).

Residue Gly-2 is the site of N-myristoyl glycine attachment. Cys-3 is lipidated: S-palmitoyl cysteine. The interval 3–35 (CGGSRADAIEPRYYESWTRETESTWLTYTDSDA) is interaction with CAMK2A. 2 disordered regions span residues 36 to 56 (LPSAAATDSGPEAGGLHAGVL) and 87 to 109 (CPNSQNLSSGPLTQKQNGLWATE). Residues 87-105 (CPNSQNLSSGPLTQKQNGL) show a composition bias toward polar residues.

In terms of assembly, interacts with CAMK2A. Palmitoylation and myristoylation target the protein to the lipid rafts. As to expression, at the mRNA level, predominantly expressed in the brain. At the protein level, mainly expressed in muscle tissues. In skeletal muscles, expressed in cranial and facial muscles, muscles of the neck, back, thoracic wall, and thigh. Also found in the contractile myoepithelial cell layer of salivary glands. In smooth muscles, expressed in the gastric wall, uterus, urinary bladder, as well as in the muscular lining around seminiferous tubules, prostatic ducts, epididymis, vas deferens, walls of small blood vessels in the dermis, and fascial layers between muscle fibers, brain, and around the spinal cord. Strongly expressed in myocardium. High expression levels are observed in placental spongiotrophoblast and adjacent myometrium. Also expressed in bone marrow hematopoietic cells. In the mature thymus, expressed in rare scattered cells. Weakly expressed in the brain neuropil, particularly near the hippocampus, and spinal cord white matter. Not detected in skin keratinocytes or lung (at protein level).

The protein resides in the cytoplasm. It is found in the synapse. The protein localises to the synaptosome. It localises to the membrane raft. Its subcellular location is the postsynaptic density. May play a synaptic role at the postsynaptic lipid rafts possibly through interaction with CAMK2A. This chain is Brain and acute leukemia cytoplasmic protein (Baalc), found in Mus musculus (Mouse).